The chain runs to 196 residues: MDNHAAVREFDEERATAAIRELLIAVGEDPDREGLLETPARVARAYKETFAGLHEDPTTVLEKTFSEGHEELVLVREIPIYSMCEHHLVPFFGVAHIGYIPGKSGKVTGLSKLARLADMLAKRPQVQERLTSQIADALVEKLDAQAVAVVIEAEHLCMAMRGIRKPGAVTTTSAVRGGFKNNAASRAEVFSLIRGH.

Residues C84, H87, and C157 each contribute to the Zn(2+) site.

The protein belongs to the GTP cyclohydrolase I family. In terms of assembly, toroid-shaped homodecamer, composed of two pentamers of five dimers.

It carries out the reaction GTP + H2O = 7,8-dihydroneopterin 3'-triphosphate + formate + H(+). It participates in cofactor biosynthesis; 7,8-dihydroneopterin triphosphate biosynthesis; 7,8-dihydroneopterin triphosphate from GTP: step 1/1. The polypeptide is GTP cyclohydrolase 1 (Corynebacterium glutamicum (strain R)).